Here is a 248-residue protein sequence, read N- to C-terminus: Ribonuclease PH (248 aa).

Phosphate is bound by residues arginine 86 and glycine 124–arginine 126.

The protein belongs to the RNase PH family. As to quaternary structure, homohexameric ring arranged as a trimer of dimers.

The catalysed reaction is tRNA(n+1) + phosphate = tRNA(n) + a ribonucleoside 5'-diphosphate. Phosphorolytic 3'-5' exoribonuclease that plays an important role in tRNA 3'-end maturation. Removes nucleotide residues following the 3'-CCA terminus of tRNAs; can also add nucleotides to the ends of RNA molecules by using nucleoside diphosphates as substrates, but this may not be physiologically important. Probably plays a role in initiation of 16S rRNA degradation (leading to ribosome degradation) during starvation. The sequence is that of Ribonuclease PH from Clostridium perfringens (strain SM101 / Type A).